A 154-amino-acid chain; its full sequence is 6,7-dimethyl-8-ribityllumazine synthase (154 aa).

Residues Phe-22, 57 to 59 (AYE), and 81 to 83 (AVI) contribute to the 5-amino-6-(D-ribitylamino)uracil site. A (2S)-2-hydroxy-3-oxobutyl phosphate-binding site is contributed by 86 to 87 (GT). The Proton donor role is filled by His-89. Phe-114 provides a ligand contact to 5-amino-6-(D-ribitylamino)uracil. Arg-128 lines the (2S)-2-hydroxy-3-oxobutyl phosphate pocket.

The protein belongs to the DMRL synthase family. In terms of assembly, forms an icosahedral capsid composed of 60 subunits, arranged as a dodecamer of pentamers.

It carries out the reaction (2S)-2-hydroxy-3-oxobutyl phosphate + 5-amino-6-(D-ribitylamino)uracil = 6,7-dimethyl-8-(1-D-ribityl)lumazine + phosphate + 2 H2O + H(+). The protein operates within cofactor biosynthesis; riboflavin biosynthesis; riboflavin from 2-hydroxy-3-oxobutyl phosphate and 5-amino-6-(D-ribitylamino)uracil: step 1/2. In terms of biological role, catalyzes the formation of 6,7-dimethyl-8-ribityllumazine by condensation of 5-amino-6-(D-ribitylamino)uracil with 3,4-dihydroxy-2-butanone 4-phosphate. This is the penultimate step in the biosynthesis of riboflavin. The sequence is that of 6,7-dimethyl-8-ribityllumazine synthase from Idiomarina loihiensis (strain ATCC BAA-735 / DSM 15497 / L2-TR).